Here is a 264-residue protein sequence, read N- to C-terminus: Thymidylate synthase (264 aa).

Arginine 21 contributes to the dUMP binding site. Histidine 51 serves as a coordination point for (6R)-5,10-methylene-5,6,7,8-tetrahydrofolate. Position 126–127 (126–127 (RR)) interacts with dUMP. Cysteine 146 functions as the Nucleophile in the catalytic mechanism. DUMP is bound by residues 166–169 (RSCD), asparagine 177, and 207–209 (HLY). Aspartate 169 is a (6R)-5,10-methylene-5,6,7,8-tetrahydrofolate binding site. Alanine 263 is a (6R)-5,10-methylene-5,6,7,8-tetrahydrofolate binding site.

The protein belongs to the thymidylate synthase family. Bacterial-type ThyA subfamily. Homodimer.

Its subcellular location is the cytoplasm. It carries out the reaction dUMP + (6R)-5,10-methylene-5,6,7,8-tetrahydrofolate = 7,8-dihydrofolate + dTMP. It functions in the pathway pyrimidine metabolism; dTTP biosynthesis. Catalyzes the reductive methylation of 2'-deoxyuridine-5'-monophosphate (dUMP) to 2'-deoxythymidine-5'-monophosphate (dTMP) while utilizing 5,10-methylenetetrahydrofolate (mTHF) as the methyl donor and reductant in the reaction, yielding dihydrofolate (DHF) as a by-product. This enzymatic reaction provides an intracellular de novo source of dTMP, an essential precursor for DNA biosynthesis. The sequence is that of Thymidylate synthase from Citrobacter koseri (strain ATCC BAA-895 / CDC 4225-83 / SGSC4696).